Reading from the N-terminus, the 704-residue chain is Chloride intracellular channel protein 6 (704 aa).

Low complexity predominate over residues 1–13; sequence MAEAAEPEGVAPG. The interval 1-446 is disordered; that stretch reads MAEAAEPEGV…EDGEASEPRA (446 aa). Over residues 39–48 the composition is skewed to acidic residues; the sequence is EGPEGSEGAE. Phosphoserine is present on Ser44. Positions 67–83 are enriched in basic and acidic residues; it reads RGPEAEARGTRGAHGET. Over residues 90 to 100 the composition is skewed to low complexity; the sequence is PEGAEVPQGGE. The segment covering 121–147 has biased composition (basic and acidic residues); the sequence is PRGEAQREPEDSAAPERQEEAEQRPEV. 13 repeat units span residues 157–166, 167–176, 177–186, 187–196, 197–206, 207–216, 217–226, 227–236, 237–246, 247–256, 257–266, 267–276, and 277–286. A 13 X 10 AA tandem repeat of G-D-[SNG]-[VIM]-[DEQ]-A-[EAG]-[GDVE]-[PRG]-[LAVP] region spans residues 157–282; the sequence is GDSVDAEGPL…EGPAGDSMDA (126 aa). Residues 295-306 show a composition bias toward polar residues; sequence EPQQSGDGSLSP. Composition is skewed to basic and acidic residues over residues 350–360 and 371–385; these read ARADAGEDRVG and EERR…REEE. 2 positions are modified to phosphoserine: Ser397 and Ser442. Over residues 434 to 446 the composition is skewed to basic and acidic residues; that stretch reads GRREDGEASEPRA. Residues 487–490 carry the G-site motif; it reads CPFS. The chain crosses the membrane as a helical span at residues 489 to 509; the sequence is FSQRLFMILWLKGVIFNVTTV. A GST C-terminal domain is found at 556–704; it reads YPKLGTQHPE…AYSDVAKRMK (149 aa).

It belongs to the chloride channel CLIC family. As to quaternary structure, monomer (soluble state). Interacts with dopamine receptors DRD2, DRD3 and DRD4. Phosphorylated. As to expression, expressed in brain, placenta, pancreas, liver, lung, heart, kidney, liver, spleen, soleus muscle, and brown fat.

The protein localises to the cytoplasm. Its subcellular location is the cell membrane. The enzyme catalyses chloride(in) = chloride(out). With respect to regulation, channel activity is redox- and pH-regulated. Inhibited by IAA-94. In terms of biological role, in the soluble state, catalyzes glutaredoxin-like thiol disulfide exchange reactions with reduced glutathione as electron donor. Can insert into membranes and form voltage-dependent chloride-selective channels. The channel opens upon membrane depolarization at positive voltages and closes at negative membrane voltages. May play a critical role in water-secreting cells, possibly through the regulation of chloride ion transport. In Homo sapiens (Human), this protein is Chloride intracellular channel protein 6.